The sequence spans 222 residues: Orotidine 5'-phosphate decarboxylase (222 aa).

Residues Asp11, Lys30, 59–68 (DFKLADIGYI), Ser115, 164–174 (PGMGSQGGSYG), Gly187, and Arg188 each bind substrate. Lys61 functions as the Proton donor in the catalytic mechanism.

Belongs to the OMP decarboxylase family. Type 1 subfamily. Homodimer.

It carries out the reaction orotidine 5'-phosphate + H(+) = UMP + CO2. Its pathway is pyrimidine metabolism; UMP biosynthesis via de novo pathway; UMP from orotate: step 2/2. Its function is as follows. Catalyzes the decarboxylation of orotidine 5'-monophosphate (OMP) to uridine 5'-monophosphate (UMP). The sequence is that of Orotidine 5'-phosphate decarboxylase from Saccharolobus solfataricus (strain ATCC 35092 / DSM 1617 / JCM 11322 / P2) (Sulfolobus solfataricus).